The chain runs to 238 residues: Flagellar L-ring protein (238 aa).

The signal sequence occupies residues 1-16 (MRKLILISLCIFFLAS). Cys-17 is lipidated: N-palmitoyl cysteine. A lipid anchor (S-diacylglycerol cysteine) is attached at Cys-17.

The protein belongs to the FlgH family. As to quaternary structure, the basal body constitutes a major portion of the flagellar organelle and consists of four rings (L,P,S, and M) mounted on a central rod.

Its subcellular location is the cell outer membrane. It is found in the bacterial flagellum basal body. In terms of biological role, assembles around the rod to form the L-ring and probably protects the motor/basal body from shearing forces during rotation. This is Flagellar L-ring protein from Thermodesulfovibrio yellowstonii (strain ATCC 51303 / DSM 11347 / YP87).